A 170-amino-acid polypeptide reads, in one-letter code: UPF0690 protein C1orf52 homolog (170 aa).

Disordered stretches follow at residues 1–56 (MAAE…PDEL) and 124–170 (SNVY…KRKV). Residues 46 to 56 (DTKKLPGPDEL) show a composition bias toward basic and acidic residues. Residues 144 to 159 (EEEEAREDSPPSDDEQ) show a composition bias toward acidic residues.

Belongs to the UPF0690 family.

The polypeptide is UPF0690 protein C1orf52 homolog (Xenopus tropicalis (Western clawed frog)).